A 231-amino-acid chain; its full sequence is L-ribulose-5-phosphate 4-epimerase SgbE (231 aa).

Substrate is bound by residues 27–28 (GN), 44–45 (SG), and 74–75 (SS). Residues Asp76, His95, and His97 each contribute to the Zn(2+) site. Residue Asp120 is the Proton donor/acceptor of the active site. His171 serves as a coordination point for Zn(2+). Tyr229 functions as the Proton donor/acceptor in the catalytic mechanism.

The protein belongs to the aldolase class II family. AraD/FucA subfamily. Zn(2+) is required as a cofactor.

It catalyses the reaction L-ribulose 5-phosphate = D-xylulose 5-phosphate. In terms of biological role, catalyzes the interconversion of L-ribulose 5-phosphate (LRu5P) and D-xylulose 5-phosphate (D-Xu5P) via a retroaldol/aldol mechanism (carbon-carbon bond cleavage analogous to a class II aldolase reaction). May be involved in the utilization of 2,3-diketo-L-gulonate. The polypeptide is L-ribulose-5-phosphate 4-epimerase SgbE (Haemophilus influenzae (strain ATCC 51907 / DSM 11121 / KW20 / Rd)).